The following is a 412-amino-acid chain: Gamma-glutamyl phosphate reductase (412 aa).

Belongs to the gamma-glutamyl phosphate reductase family.

It localises to the cytoplasm. The catalysed reaction is L-glutamate 5-semialdehyde + phosphate + NADP(+) = L-glutamyl 5-phosphate + NADPH + H(+). The protein operates within amino-acid biosynthesis; L-proline biosynthesis; L-glutamate 5-semialdehyde from L-glutamate: step 2/2. In terms of biological role, catalyzes the NADPH-dependent reduction of L-glutamate 5-phosphate into L-glutamate 5-semialdehyde and phosphate. The product spontaneously undergoes cyclization to form 1-pyrroline-5-carboxylate. This Actinobacillus pleuropneumoniae serotype 7 (strain AP76) protein is Gamma-glutamyl phosphate reductase.